The sequence spans 798 residues: Phenylalanine--tRNA ligase beta subunit (798 aa).

In terms of domain architecture, tRNA-binding spans Ser-39–Leu-148. Positions Asp-401–Ala-476 constitute a B5 domain. Residues Asp-454, Asp-460, Glu-463, and Glu-464 each coordinate Mg(2+). One can recognise an FDX-ACB domain in the interval Ser-704 to Arg-797.

This sequence belongs to the phenylalanyl-tRNA synthetase beta subunit family. Type 1 subfamily. Tetramer of two alpha and two beta subunits. Mg(2+) is required as a cofactor.

It localises to the cytoplasm. The enzyme catalyses tRNA(Phe) + L-phenylalanine + ATP = L-phenylalanyl-tRNA(Phe) + AMP + diphosphate + H(+). This is Phenylalanine--tRNA ligase beta subunit from Paramagnetospirillum magneticum (strain ATCC 700264 / AMB-1) (Magnetospirillum magneticum).